The chain runs to 322 residues: Elongation factor P--(R)-beta-lysine ligase (322 aa).

Substrate is bound at residue 75–77 (SPE). 99–101 (RNE) contacts ATP. Position 117 (Tyr117) interacts with substrate. Residue 241–242 (EL) coordinates ATP. Glu248 is a substrate binding site. Gly297 contacts ATP.

It belongs to the class-II aminoacyl-tRNA synthetase family. EpmA subfamily. Homodimer.

The enzyme catalyses D-beta-lysine + L-lysyl-[protein] + ATP = N(6)-((3R)-3,6-diaminohexanoyl)-L-lysyl-[protein] + AMP + diphosphate + H(+). In terms of biological role, with EpmB is involved in the beta-lysylation step of the post-translational modification of translation elongation factor P (EF-P). Catalyzes the ATP-dependent activation of (R)-beta-lysine produced by EpmB, forming a lysyl-adenylate, from which the beta-lysyl moiety is then transferred to the epsilon-amino group of a conserved specific lysine residue in EF-P. This Avibacterium paragallinarum (Haemophilus gallinarum) protein is Elongation factor P--(R)-beta-lysine ligase.